Reading from the N-terminus, the 210-residue chain is Glutathione S-transferase-like protein FUS3 (210 aa).

The 74-residue stretch at 1–74 (MPNARVFKIL…YVAQSGPQAS (74 aa)) folds into the GST N-terminal domain. The region spanning 80 to 206 (DAMSSAKIRQ…GKPNFIEKRR (127 aa)) is the GST C-terminal domain.

It belongs to the GST superfamily.

Glutathione S-transferase-like protein; part of the gene cluster that mediates the biosynthesis of the mycotoxin fusarin C. Within the cluster, FUS1, FUS2, FUS8 and FUS9 are sufficient for fusarin production. The other FUS cluster members are not essential for fusarin C biosynthesis. The protein is Glutathione S-transferase-like protein FUS3 of Gibberella fujikuroi (strain CBS 195.34 / IMI 58289 / NRRL A-6831) (Bakanae and foot rot disease fungus).